Consider the following 373-residue polypeptide: Anhydro-N-acetylmuramic acid kinase (373 aa).

Residue 12–19 (GTSLDGVD) coordinates ATP.

It belongs to the anhydro-N-acetylmuramic acid kinase family.

The catalysed reaction is 1,6-anhydro-N-acetyl-beta-muramate + ATP + H2O = N-acetyl-D-muramate 6-phosphate + ADP + H(+). The protein operates within amino-sugar metabolism; 1,6-anhydro-N-acetylmuramate degradation. It participates in cell wall biogenesis; peptidoglycan recycling. In terms of biological role, catalyzes the specific phosphorylation of 1,6-anhydro-N-acetylmuramic acid (anhMurNAc) with the simultaneous cleavage of the 1,6-anhydro ring, generating MurNAc-6-P. Is required for the utilization of anhMurNAc either imported from the medium or derived from its own cell wall murein, and thus plays a role in cell wall recycling. In Salmonella dublin (strain CT_02021853), this protein is Anhydro-N-acetylmuramic acid kinase.